The chain runs to 306 residues: Mitochondrial glycine transporter (306 aa).

Solcar repeat units lie at residues 25-114, 121-205, and 217-301; these read QPVI…LKQY, PTAL…TKNV, and LVPV…MMAK. Helical transmembrane passes span 31-56, 89-115, 127-152, 180-203, 221-247, and 276-294; these read FLCGSISGTCSTVLFQPLDLLKTRLQ, GMSPSIVRCVPGVGIYFGTLYSLKQYF, VILGAGSRSVAGVCMSPITVIKTRYE, GLTATLLRDAPFSGIYLMFYSQTK, VNFSCGIFAGILASLVTQPADVIKTHM, and GSVPRALRRTLVAAMAWTV.

The protein belongs to the mitochondrial carrier (TC 2.A.29) family. SLC25A38 subfamily.

Its subcellular location is the mitochondrion inner membrane. It catalyses the reaction glycine(in) = glycine(out). Functionally, mitochondrial glycine transporter that imports glycine into the mitochondrial matrix. Plays an important role in providing glycine for the first enzymatic step in heme biosynthesis, the condensation of glycine with succinyl-CoA to produce 5-aminolevulinate (ALA) in the mitochondrial matrix. Required during erythropoiesis. Plays a role as pro-apoptotic protein that induces caspase-dependent apoptosis. In Ovis aries (Sheep), this protein is Mitochondrial glycine transporter.